Consider the following 332-residue polypeptide: Methionyl-tRNA formyltransferase (332 aa).

124–127 (SLLP) serves as a coordination point for (6S)-5,6,7,8-tetrahydrofolate.

This sequence belongs to the Fmt family.

The catalysed reaction is L-methionyl-tRNA(fMet) + (6R)-10-formyltetrahydrofolate = N-formyl-L-methionyl-tRNA(fMet) + (6S)-5,6,7,8-tetrahydrofolate + H(+). Functionally, attaches a formyl group to the free amino group of methionyl-tRNA(fMet). The formyl group appears to play a dual role in the initiator identity of N-formylmethionyl-tRNA by promoting its recognition by IF2 and preventing the misappropriation of this tRNA by the elongation apparatus. The polypeptide is Methionyl-tRNA formyltransferase (Polynucleobacter necessarius subsp. necessarius (strain STIR1)).